A 185-amino-acid chain; its full sequence is GTP cyclohydrolase 1 (185 aa).

3 residues coordinate Zn(2+): C76, H79, and C147.

The protein belongs to the GTP cyclohydrolase I family. In terms of assembly, toroid-shaped homodecamer, composed of two pentamers of five dimers.

The enzyme catalyses GTP + H2O = 7,8-dihydroneopterin 3'-triphosphate + formate + H(+). It participates in cofactor biosynthesis; 7,8-dihydroneopterin triphosphate biosynthesis; 7,8-dihydroneopterin triphosphate from GTP: step 1/1. This Clostridium perfringens (strain 13 / Type A) protein is GTP cyclohydrolase 1.